Reading from the N-terminus, the 44-residue chain is Phosphatase RapE inhibitor (44 aa).

Propeptides lie at residues M1–A30 and L36–V44.

It belongs to the Phr family. Contains a predicted signal peptide cleavage site in the N-terminal region, however the propeptide is probably only subject to processing events at the ends of the mature peptide.

The protein resides in the secreted. Its subcellular location is the cytoplasm. Its function is as follows. Signaling molecule involved in the regulation of sporulation. Secreted during production, but the mature peptide acts intracellularly, indicating that it needs to be imported into the cell to function. Inhibitor of the RapE phosphatase activity. Does not inhibit the phosphatase activity of RapA and RapB. Probably plays a dispensable role in the overall context of sporulation initiation. This chain is Phosphatase RapE inhibitor (phrE), found in Bacillus subtilis (strain 168).